We begin with the raw amino-acid sequence, 495 residues long: Aspartyl/glutamyl-tRNA(Asn/Gln) amidotransferase subunit B (495 aa).

It belongs to the GatB/GatE family. GatB subfamily. Heterotrimer of A, B and C subunits.

It carries out the reaction L-glutamyl-tRNA(Gln) + L-glutamine + ATP + H2O = L-glutaminyl-tRNA(Gln) + L-glutamate + ADP + phosphate + H(+). It catalyses the reaction L-aspartyl-tRNA(Asn) + L-glutamine + ATP + H2O = L-asparaginyl-tRNA(Asn) + L-glutamate + ADP + phosphate + 2 H(+). In terms of biological role, allows the formation of correctly charged Asn-tRNA(Asn) or Gln-tRNA(Gln) through the transamidation of misacylated Asp-tRNA(Asn) or Glu-tRNA(Gln) in organisms which lack either or both of asparaginyl-tRNA or glutaminyl-tRNA synthetases. The reaction takes place in the presence of glutamine and ATP through an activated phospho-Asp-tRNA(Asn) or phospho-Glu-tRNA(Gln). The protein is Aspartyl/glutamyl-tRNA(Asn/Gln) amidotransferase subunit B of Crocosphaera subtropica (strain ATCC 51142 / BH68) (Cyanothece sp. (strain ATCC 51142)).